The chain runs to 363 residues: Phosphoserine aminotransferase (363 aa).

Arg42 is an L-glutamate binding site. Residues 76-77 (AS), Trp101, Thr151, Asp170, and Gln193 each bind pyridoxal 5'-phosphate. The residue at position 194 (Lys194) is an N6-(pyridoxal phosphate)lysine. 234-235 (NT) contacts pyridoxal 5'-phosphate.

Belongs to the class-V pyridoxal-phosphate-dependent aminotransferase family. SerC subfamily. As to quaternary structure, homodimer. Pyridoxal 5'-phosphate is required as a cofactor.

It localises to the cytoplasm. It catalyses the reaction O-phospho-L-serine + 2-oxoglutarate = 3-phosphooxypyruvate + L-glutamate. It carries out the reaction 4-(phosphooxy)-L-threonine + 2-oxoglutarate = (R)-3-hydroxy-2-oxo-4-phosphooxybutanoate + L-glutamate. It functions in the pathway amino-acid biosynthesis; L-serine biosynthesis; L-serine from 3-phospho-D-glycerate: step 2/3. Its function is as follows. Catalyzes the reversible conversion of 3-phosphohydroxypyruvate to phosphoserine and of 3-hydroxy-2-oxo-4-phosphonooxybutanoate to phosphohydroxythreonine. This chain is Phosphoserine aminotransferase, found in Listeria monocytogenes serovar 1/2a (strain ATCC BAA-679 / EGD-e).